Reading from the N-terminus, the 2475-residue chain is Non-reducing polyketide synthase prhL (2475 aa).

An N-terminal acylcarrier protein transacylase domain (SAT) region spans residues Val-14–Gln-253. The region spanning Ser-384–Glu-800 is the Ketosynthase family 3 (KS3) domain. Residues Cys-549, His-684, and His-723 each act as for beta-ketoacyl synthase activity in the active site. A malonyl-CoA:ACP transacylase (MAT) domain region spans residues Leu-910–Ala-1212. Ser-997 (for acyl/malonyl transferase activity) is an active-site residue. The interval Glu-1279–Asn-1407 is N-terminal hotdog fold. One can recognise a PKS/mFAS DH domain in the interval Glu-1279–Arg-1586. Residues Lys-1282–Leu-1585 form a product template (PT) domain region. His-1312 (proton acceptor; for dehydratase activity) is an active-site residue. Residues Ser-1435–Arg-1586 form a C-terminal hotdog fold region. Asp-1493 acts as the Proton donor; for dehydratase activity in catalysis. The 78-residue stretch at Ser-1626–Arg-1703 folds into the Carrier domain. The residue at position 1663 (Ser-1663) is an O-(pantetheine 4'-phosphoryl)serine. The interval His-1865–Asn-2098 is methyltransferase (CMeT) domain. A thioesterase (TE) domain region spans residues Ser-2127–Leu-2475. Catalysis depends on for thioesterase activity residues Ser-2250 and Asp-2412.

It carries out the reaction 3 malonyl-CoA + acetyl-CoA + 2 S-adenosyl-L-methionine = 3,5-dimethylorsellinate + 2 S-adenosyl-L-homocysteine + 3 CO2 + 4 CoA. The protein operates within secondary metabolite biosynthesis; terpenoid biosynthesis. Its function is as follows. Non-reducing polyketide synthase; part of the gene cluster that mediates the biosynthesis of paraherquonin, a meroterpenoid with a unique, highly congested hexacyclic molecular architecture. The first step of the pathway is the synthesis of 3,5-dimethylorsellinic acid (DMOA) by the polyketide synthase prhL. Synthesis of DMOA is followed by farnesylation by the prenyltransferase prhE, methylesterification by the methyl-transferase prhM, epoxidation of the prenyl chain by the flavin-dependent monooxygenase prhF, and cyclization of the farnesyl moiety by the terpene cyclase prhH, to yield the tetracyclic intermediate, protoaustinoid A. The short chain dehydrogenase prhI then oxidizes the C-3 alcohol group of the terpene cyclase product to transform protoaustinoid A into protoaustinoid B. The FAD-binding monooxygenase prhJ catalyzes the oxidation of protoaustinoid B into preaustinoid A which is further oxidized into preaustinoid A1 by FAD-binding monooxygenase phrK. Finally, prhA leads to berkeleydione via the berkeleyone B intermediate. PrhA is a multifunctional dioxygenase that first desaturates at C5-C6 to form berkeleyone B, followed by rearrangement of the A/B-ring to form the cycloheptadiene moiety in berkeleydione. Berkeleydione serves as the key intermediate for the biosynthesis of paraherquonin as well as many other meroterpenoids. The cytochrome P450 monooxygenases prhB, prhD, and prhN, as well as the isomerase prhC, are probably involved in the late stage of paraherquonin biosynthesis, after the production of berkeleydione. Especially prhC might be a multifunctional enzyme that catalyzes the D-ring expansion via intramolecular methoxy rearrangement, as well as the hydrolysis of the expanded D-ring. The sequence is that of Non-reducing polyketide synthase prhL from Penicillium brasilianum.